Reading from the N-terminus, the 342-residue chain is Galactose mutarotase (342 aa).

At A2 the chain carries N-acetylalanine. A Phosphoserine modification is found at S14. Beta-D-galactose contacts are provided by residues 81–82 (NR) and H107. S124 carries the phosphoserine modification. H176 (proton donor) is an active-site residue. Residues 176-178 (HSY), D243, Q279, and E307 contribute to the beta-D-galactose site. Residue E307 is the Proton acceptor of the active site.

It belongs to the aldose epimerase family. In terms of assembly, monomer.

It localises to the cytoplasm. The enzyme catalyses alpha-D-galactose = beta-D-galactose. It carries out the reaction alpha-D-glucose = beta-D-glucose. It functions in the pathway carbohydrate metabolism; hexose metabolism. It participates in carbohydrate metabolism; galactose metabolism. In terms of biological role, mutarotase that catalyzes the interconversion of beta-D-galactose and alpha-D-galactose during galactose metabolism. Beta-D-galactose is metabolized in the liver into glucose 1-phosphate, the primary metabolic fuel, by the action of four enzymes that constitute the Leloir pathway: GALM, GALK1 (galactokinase), GALT (galactose-1-phosphate uridylyltransferase) and GALE (UDP-galactose-4'-epimerase). Involved in the maintenance of the equilibrium between the beta- and alpha-anomers of galactose, therefore ensuring a sufficient supply of the alpha-anomer for GALK1. Also active on D-glucose although shows a preference for galactose over glucose. The chain is Galactose mutarotase (GALM) from Pongo abelii (Sumatran orangutan).